Consider the following 233-residue polypeptide: uncharacterized protein (233 aa).

The first 23 residues, 1-23 (MEIKYFLVLLVGFLLVLPSIVNP), serve as a signal peptide directing secretion. A disordered region spans residues 42–217 (LDVNNPHNPN…HHHHQEASEC (176 aa)). Residues 45–64 (NNPHNPNNNPHNPHNPNNNP) are compositionally biased toward low complexity. Over residues 65 to 211 (HHPHHLHHHH…HPHPHHHHHH (147 aa)) the composition is skewed to basic residues.

It localises to the secreted. This is an uncharacterized protein from Dictyostelium discoideum (Social amoeba).